The sequence spans 421 residues: MRAQNNLTVEVDCHSLGSNECPSMTSSFSPMDSPTPTPTSIYSQGSLASPGWQDAGSYPGHAYERHTGTTPMRSAFRLAGMTSNENMAMSYGAMEAQERMPMPDFLSAYDDNVEHFWLPSDAPKTYETGTHSLPYPHTLPQCPPMVRSNYRPHAAYLPEAATNPCLSRSIFHHAERVPQSMSMGNMMPWIPQASESIAPQTIAPSQVGPVTPPPSYSEFPTSIQTFKTHSPTTPLRSCSIGTASGPDTPISRMSGGAADYLEDFQQSPPFRDGLNRLQRHPSRKMIRKQSSRQNMSLENLPSIIKQVQFKCKEPGCKGRFKRQEHLKRHMKSHSKEKPHVCWVPGCERAFSRSDNLNAHYTKTHSKRGGRNRYVATLDESSPDYDPDFRGQLTPDGRPIRGSTLDDPMPDTREYSVDGLDD.

Over residues 228 to 242 (THSPTTPLRSCSIGT) the composition is skewed to polar residues. A disordered region spans residues 228 to 247 (THSPTTPLRSCSIGTASGPD). 2 C2H2-type zinc fingers span residues 309–333 (FKCKEPGCKGRFKRQEHLKRHMKSH) and 339–364 (HVCWVPGCERAFSRSDNLNAHYTKTH). Basic residues predominate over residues 361–370 (TKTHSKRGGR). The interval 361-421 (TKTHSKRGGR…REYSVDGLDD (61 aa)) is disordered.

The protein resides in the nucleus. In terms of biological role, brlA, abaA and wetA are pivotal regulators of conidiophore development and conidium maturation. They act individually and together to regulate their own expression and that of numerous other sporulation-specific genes. Binds promoters of target genes at brlA response elements (BREs) containing the conserved sequence 5'-(C/A)(A/G)AGGG(G/A)-3'. The polypeptide is C2H2 type master regulator of conidiophore development brlA (Aspergillus parasiticus (strain ATCC 56775 / NRRL 5862 / SRRC 143 / SU-1)).